Reading from the N-terminus, the 296-residue chain is 4-hydroxybenzoate octaprenyltransferase (296 aa).

The next 8 helical transmembrane spans lie at 28-48 (PIGIYLLLWPTLVAVWIAGNG), 55-75 (VLIFALGVVLMRAAGCCINDF), 102-122 (AVMLFALLVGVSFLLVLCTNA), 145-167 (TYYPQVVLGAAYSWGIPMAFTAA), 174-196 (SAWLLYIANLLWTVGYDTYYAMV), 219-239 (VIILTLQLLSLGCLLLAGNRF), 241-261 (LGGWYHLGLLAAAACFAWEFW), and 275-295 (FLHNHWAGMLIFIGVVLDYAL).

Belongs to the UbiA prenyltransferase family. It depends on Mg(2+) as a cofactor.

The protein localises to the cell inner membrane. The catalysed reaction is all-trans-octaprenyl diphosphate + 4-hydroxybenzoate = 4-hydroxy-3-(all-trans-octaprenyl)benzoate + diphosphate. Its pathway is cofactor biosynthesis; ubiquinone biosynthesis. Its function is as follows. Catalyzes the prenylation of para-hydroxybenzoate (PHB) with an all-trans polyprenyl group. Mediates the second step in the final reaction sequence of ubiquinone-8 (UQ-8) biosynthesis, which is the condensation of the polyisoprenoid side chain with PHB, generating the first membrane-bound Q intermediate 3-octaprenyl-4-hydroxybenzoate. This Pseudomonas entomophila (strain L48) protein is 4-hydroxybenzoate octaprenyltransferase.